Here is a 354-residue protein sequence, read N- to C-terminus: C-C chemokine receptor type 5 (354 aa).

The Extracellular portion of the chain corresponds to 1–32; sequence MDFQGSVPTYSYDIDYGMSAPCQKINVKQIAA. An O-linked (GalNAc...) serine glycan is attached at Ser6. Sulfotyrosine occurs at positions 10, 12, and 16. 2 disulfides stabilise this stretch: Cys22–Cys271 and Cys103–Cys180. The helical transmembrane segment at 33-60 threads the bilayer; that stretch reads QLLPPLYSLVFIFGFVGNMMVFLILISC. At 61–70 the chain is on the cytoplasmic side; the sequence is KKLKSVTDIY. The chain crosses the membrane as a helical span at residues 71–91; it reads LLNLAISDLLFLLTLPFWAHY. Residues 92–104 are Extracellular-facing; it reads AANEWVFGNIMCK. Residues 105-126 form a helical membrane-spanning segment; that stretch reads VFTGLYHIGYFGGIFFIILLTI. Residues 127–143 are Cytoplasmic-facing; it reads DRYLAIVHAVFALKVRT. The chain crosses the membrane as a helical span at residues 144-168; that stretch reads VNFGVITSVVTWAVAVFASLPEIIF. Over 169–200 the chain is Extracellular; sequence TRSQKEGFHYTCSPHFPHTQYHFWKSFQTLKM. Residues 201-220 traverse the membrane as a helical segment; that stretch reads VILSLILPLLVMVICYSGIL. The Cytoplasmic segment spans residues 221–237; the sequence is HTLFRCRNEKKRHRAVR. Residues 238–262 traverse the membrane as a helical segment; the sequence is LIFAIMIVYFLFWTPYNIVLLLTTF. Topologically, residues 263–279 are extracellular; that stretch reads QEFFGLNNCSSSNRLDQ. Residues 280 to 303 traverse the membrane as a helical segment; sequence AMQATETLGMTHCCLNPVIYAFVG. Residues 304-354 are Cytoplasmic-facing; sequence EKFRSYLSVFFRKHMVKRFCKRCSIFQQDNPDRASSVYTRSTGEHEVSTGL. Residues Cys323 and Cys326 are each lipidated (S-palmitoyl cysteine). Residues Ser338, Ser339, Ser344, and Ser351 each carry the phosphoserine; by BARK1 modification.

This sequence belongs to the G-protein coupled receptor 1 family. Interacts with PRAF2. Efficient ligand binding to CCL3/MIP-1alpha and CCL4/MIP-1beta requires sulfation, O-glycosylation and sialic acid modifications. Glycosylation on Ser-6 is required for efficient binding of CCL4. Interacts with GRK2. Interacts with ARRB1 and ARRB2. Interacts with CNIH4. Interacts with S100A4; this interaction stimulates T-lymphocyte chemotaxis. In terms of processing, sulfated on at least 2 of the N-terminal tyrosines. Sulfation is required for efficient binding of the chemokines, CCL3 and CCL4. O-glycosylated, but not N-glycosylated. Ser-6 appears to be the major site. Also sialylated glycans present which contribute to chemokine binding. Post-translationally, palmitoylation in the C-terminal is important for cell surface expression. In terms of processing, phosphorylation on serine residues in the C-terminal is stimulated by binding CC chemokines especially by APO-RANTES.

The protein resides in the cell membrane. Functionally, receptor for a number of inflammatory CC-chemokines including CCL3/MIP-1-alpha, CCL4/MIP-1-beta and RANTES and subsequently transduces a signal by increasing the intracellular calcium ion level. May play a role in the control of granulocytic lineage proliferation or differentiation. Participates in T-lymphocyte migration to the infection site by acting as a chemotactic receptor. The sequence is that of C-C chemokine receptor type 5 (Ccr5) from Mus musculus (Mouse).